The primary structure comprises 987 residues: MELRVLLCWASLAAALEETLLNTKLETADLKWVTFPQVDGQWEELSGLDEEQHSVRTYEVCDVQRAPGQAHWLRTGWVPRRGAVHVYATLRFTMLECLSLPRAGRSCKETFTVFYYESDADTATALTPAWMENPYIKVDTVAAEHLTRKRPGAEATGKVNVKTLRLGPLSKAGFYLAFQDQGACMALLSLHLFYKKCAQLTVNLTRFPETVPRELVVPVAGSCVVDAVPAPGPSPSLYCREDGQWAEQPVTGCSCAPGFEAAEGNTKCRACAQGTFKPLSGEGSCQPCPANSHSNTIGSAVCQCRVGYFRARTDPRGAPCTTPPSAPRSVVSRLNGSSLHLEWSAPLESGGREDLTYALRCRECRPGGSCAPCGGDLTFDPGPRDLVEPWVVVRGLRPDFTYTFEVTALNGVSSLATGPVPFEPVNVTTDREVPPAVSDIRVTRSSPSSLSLAWAVPRAPSGAVLDYEVKYHEKGAEGPSSVRFLKTSENRAELRGLKRGASYLVQVRARSEAGYGPFGQEHHSQTQLDESEGWREQLALIAGTAVVGVVLVLVVIVVAVLCLRKQSNGREAEYSDKHGQYLIGHGTKVYIDPFTYEDPNEAVREFAKEIDVSYVKIEEVIGAGEFGEVCRGRLKAPGKKESCVAIKTLKGGYTERQRREFLSEASIMGQFEHPNIIRLEGVVTNSMPVMILTEFMENGALDSFLRLNDGQFTVIQLVGMLRGIASGMRYLAEMSYVHRDLAARNILVNSNLVCKVSDFGLSRFLEENSSDPTYTSSLGGKIPIRWTAPEAIAFRKFTSASDAWSYGIVMWEVMSFGERPYWDMSNQDVINAIEQDYRLPPPPDCPTSLHQLMLDCWQKDRNARPRFPQVVSALDKMIRNPASLKIVARENGGASHPLLDQRQPHYSAFGSVGEWLRAIKMGRYEESFAAAGFGSFELVSQISAEDLLRIGVTLAGHQKKILASVQHMKSQAKPGTPGGTGGPAPQY.

A signal peptide spans 1–15 (MELRVLLCWASLAAA). Over 16–539 (LEETLLNTKL…ESEGWREQLA (524 aa)) the chain is Extracellular. The region spanning 17–202 (EETLLNTKLE…FYKKCAQLTV (186 aa)) is the Eph LBD domain. 2 disulfide bridges follow: C61-C184 and C97-C107. Residues N203, N335, and N426 are each glycosylated (N-linked (GlcNAc...) asparagine). Fibronectin type-III domains follow at residues 323–432 (PPSA…TDRE) and 436–529 (AVSD…TQLD). Residues 540-560 (LIAGTAVVGVVLVLVVIVVAV) traverse the membrane as a helical segment. Residues 561 to 987 (LCLRKQSNGR…GGTGGPAPQY (427 aa)) lie on the Cytoplasmic side of the membrane. Positions 615 to 899 (VKIEEVIGAG…ENGGASHPLL (285 aa)) constitute a Protein kinase domain. ATP contacts are provided by residues 621-629 (IGAGEFGEV) and K647. D740 functions as the Proton acceptor in the catalytic mechanism. A phosphoserine mark is found at S769, S770, S911, and S943. In terms of domain architecture, SAM spans 907-971 (SAFGSVGEWL…LASVQHMKSQ (65 aa)). The interval 965–987 (VQHMKSQAKPGTPGGTGGPAPQY) is disordered. Position 976 is a phosphothreonine (T976). Residues 976–987 (TPGGTGGPAPQY) show a composition bias toward gly residues. Residues 985 to 987 (PQY) carry the PDZ-binding motif. A Phosphotyrosine modification is found at Y987.

This sequence belongs to the protein kinase superfamily. Tyr protein kinase family. Ephrin receptor subfamily. In terms of assembly, heterotetramer upon binding of the ligand. The heterotetramer is composed of an ephrin dimer and a receptor dimer. Oligomerization is probably required to induce biological responses. Interacts with RASA1; the interaction depends on EPHB4 tyrosine-phosphorylation. Post-translationally, phosphorylated; autophosphorylation is stimulated by EFNB2. In terms of tissue distribution, abundantly expressed in placenta but also detected in kidney, liver, lung, pancreas, skeletal muscle and heart. Expressed in primitive and myeloid, but not lymphoid, hematopoietic cells. Also observed in cell lines derived from liver, breast, colon, lung, melanocyte and cervix.

It localises to the cell membrane. It carries out the reaction L-tyrosyl-[protein] + ATP = O-phospho-L-tyrosyl-[protein] + ADP + H(+). Its function is as follows. Receptor tyrosine kinase which binds promiscuously transmembrane ephrin-B family ligands residing on adjacent cells, leading to contact-dependent bidirectional signaling into neighboring cells. The signaling pathway downstream of the receptor is referred to as forward signaling while the signaling pathway downstream of the ephrin ligand is referred to as reverse signaling. Together with its cognate ligand/functional ligand EFNB2 it is involved in the regulation of cell adhesion and migration, and plays a central role in heart morphogenesis, angiogenesis and blood vessel remodeling and permeability. EPHB4-mediated forward signaling controls cellular repulsion and segregation from EFNB2-expressing cells. The polypeptide is Ephrin type-B receptor 4 (EPHB4) (Homo sapiens (Human)).